The chain runs to 169 residues: ATP-dependent Clp protease adapter protein CLPS2, chloroplastic (169 aa).

The N-terminal 33 residues, 1–33 (MLATRCKCNLPSRSFVAPARSVRTRALHVEGRF), are a transit peptide targeting the chloroplast. The segment at 67-92 (DAKTDNGNNGSNTDKDKKSPPGGGNY) is disordered.

The protein belongs to the ClpS family.

Its subcellular location is the plastid. It localises to the chloroplast stroma. Functionally, small adapter protein that modulate the activity of plastid Clp protease system (CLPC). Probably involved in substrate selection for plastid CLPC. This Chlamydomonas reinhardtii (Chlamydomonas smithii) protein is ATP-dependent Clp protease adapter protein CLPS2, chloroplastic.